Consider the following 925-residue polypeptide: Bifunctional glutamine synthetase adenylyltransferase/adenylyl-removing enzyme (925 aa).

Residues 1 to 426 are adenylyl removase; that stretch reads MTDASDLLSL…AQFDQVFADK (426 aa). An adenylyl transferase region spans residues 436–925; it reads DQAAGCIWSG…AALWARVFGA (490 aa).

The protein belongs to the GlnE family. Mg(2+) is required as a cofactor.

It carries out the reaction [glutamine synthetase]-O(4)-(5'-adenylyl)-L-tyrosine + phosphate = [glutamine synthetase]-L-tyrosine + ADP. The enzyme catalyses [glutamine synthetase]-L-tyrosine + ATP = [glutamine synthetase]-O(4)-(5'-adenylyl)-L-tyrosine + diphosphate. Functionally, involved in the regulation of glutamine synthetase GlnA, a key enzyme in the process to assimilate ammonia. When cellular nitrogen levels are high, the C-terminal adenylyl transferase (AT) inactivates GlnA by covalent transfer of an adenylyl group from ATP to specific tyrosine residue of GlnA, thus reducing its activity. Conversely, when nitrogen levels are low, the N-terminal adenylyl removase (AR) activates GlnA by removing the adenylyl group by phosphorolysis, increasing its activity. The regulatory region of GlnE binds the signal transduction protein PII (GlnB) which indicates the nitrogen status of the cell. The sequence is that of Bifunctional glutamine synthetase adenylyltransferase/adenylyl-removing enzyme from Burkholderia mallei (strain ATCC 23344).